The following is a 75-amino-acid chain: DNA-directed RNA polymerase subunit omega (75 aa).

Belongs to the RNA polymerase subunit omega family. In terms of assembly, the RNAP catalytic core consists of 2 alpha, 1 beta, 1 beta' and 1 omega subunit. When a sigma factor is associated with the core the holoenzyme is formed, which can initiate transcription.

It catalyses the reaction RNA(n) + a ribonucleoside 5'-triphosphate = RNA(n+1) + diphosphate. In terms of biological role, promotes RNA polymerase assembly. Latches the N- and C-terminal regions of the beta' subunit thereby facilitating its interaction with the beta and alpha subunits. The polypeptide is DNA-directed RNA polymerase subunit omega (Thermosipho melanesiensis (strain DSM 12029 / CIP 104789 / BI429)).